Consider the following 313-residue polypeptide: 4-hydroxyproline 2-epimerase (313 aa).

Residues 1–23 form a disordered region; it reads MHVIDSHTGGEPTRVILSGGPHL. The Proton acceptor role is filled by cysteine 85. Substrate contacts are provided by residues 86–87, histidine 205, and aspartate 231; that span reads GH. The active-site Proton donor is the cysteine 235. 236 to 237 serves as a coordination point for substrate; sequence GT.

This sequence belongs to the proline racemase family.

It carries out the reaction trans-4-hydroxy-L-proline = cis-4-hydroxy-D-proline. Catalyzes the epimerization of trans-4-hydroxy-L-proline (t4LHyp) to cis-4-hydroxy-D-proline (c4DHyp). Is likely involved in a degradation pathway that converts t4LHyp to alpha-ketoglutarate. Displays no proline racemase activity. In Ruegeria pomeroyi (strain ATCC 700808 / DSM 15171 / DSS-3) (Silicibacter pomeroyi), this protein is 4-hydroxyproline 2-epimerase.